The chain runs to 33 residues: Ferredoxin (33 aa).

One can recognise a 2Fe-2S ferredoxin-type domain in the interval Lys-3–Glu-33.

It belongs to the 2Fe2S plant-type ferredoxin family. It depends on [2Fe-2S] cluster as a cofactor.

The protein localises to the plastid. It localises to the chloroplast. Functionally, ferredoxins are iron-sulfur proteins that transfer electrons in a wide variety of metabolic reactions. This is Ferredoxin from Porphyridium aerugineum (Red microalga).